We begin with the raw amino-acid sequence, 196 residues long: Probable thymidylate kinase (196 aa).

9–16 provides a ligand contact to ATP; that stretch reads GIDGSGKT.

This sequence belongs to the thymidylate kinase family.

It carries out the reaction dTMP + ATP = dTDP + ADP. The chain is Probable thymidylate kinase from Methanococcus aeolicus (strain ATCC BAA-1280 / DSM 17508 / OCM 812 / Nankai-3).